The primary structure comprises 297 residues: Acetyl-coenzyme A carboxylase carboxyl transferase subunit beta (297 aa).

Positions 1 to 23 (MSWIERILGRTSSSSSSSKSKVP) are disordered. One can recognise a CoA carboxyltransferase N-terminal domain in the interval 26–295 (VWTKCTSCEQ…PFKTAELIVE (270 aa)). 4 residues coordinate Zn(2+): cysteine 30, cysteine 33, cysteine 49, and cysteine 52. The C4-type zinc-finger motif lies at 30–52 (CTSCEQVLYSEELKRNMHVCPKC).

This sequence belongs to the AccD/PCCB family. Acetyl-CoA carboxylase is a heterohexamer composed of biotin carboxyl carrier protein (AccB), biotin carboxylase (AccC) and two subunits each of ACCase subunit alpha (AccA) and ACCase subunit beta (AccD). Zn(2+) serves as cofactor.

It localises to the cytoplasm. The catalysed reaction is N(6)-carboxybiotinyl-L-lysyl-[protein] + acetyl-CoA = N(6)-biotinyl-L-lysyl-[protein] + malonyl-CoA. The protein operates within lipid metabolism; malonyl-CoA biosynthesis; malonyl-CoA from acetyl-CoA: step 1/1. In terms of biological role, component of the acetyl coenzyme A carboxylase (ACC) complex. Biotin carboxylase (BC) catalyzes the carboxylation of biotin on its carrier protein (BCCP) and then the CO(2) group is transferred by the transcarboxylase to acetyl-CoA to form malonyl-CoA. The polypeptide is Acetyl-coenzyme A carboxylase carboxyl transferase subunit beta (Actinobacillus pleuropneumoniae serotype 7 (strain AP76)).